We begin with the raw amino-acid sequence, 273 residues long: MNNRVHQGHLARKRFGQNFLNDQFVIDSIVSAINPQKGQAMVEIGPGLAALTEPVGERLDQLTVIELDRDLAARLQTHPFLGPKLTIYQQDAMTFNFGELAAKMGQPLRVFGNLPYNISTPLMFHLFSYTDAIADMHFMLQKEVVNRLVAGPNSKAYGRLSVMAQYYCNVIPVLEVPPSAFTPPPKVDSAVVRLVPHATMPHPVKDVRVLSRITTEAFNQRRKTIRNSLGNLFSVEVLTGMGIDPAMRAENISVAQYCQMANYLAENAPLQES.

S-adenosyl-L-methionine contacts are provided by Asn18, Leu20, Gly45, Glu66, Asp91, and Asn113.

Belongs to the class I-like SAM-binding methyltransferase superfamily. rRNA adenine N(6)-methyltransferase family. RsmA subfamily.

It is found in the cytoplasm. It catalyses the reaction adenosine(1518)/adenosine(1519) in 16S rRNA + 4 S-adenosyl-L-methionine = N(6)-dimethyladenosine(1518)/N(6)-dimethyladenosine(1519) in 16S rRNA + 4 S-adenosyl-L-homocysteine + 4 H(+). In terms of biological role, specifically dimethylates two adjacent adenosines (A1518 and A1519) in the loop of a conserved hairpin near the 3'-end of 16S rRNA in the 30S particle. May play a critical role in biogenesis of 30S subunits. The sequence is that of Ribosomal RNA small subunit methyltransferase A from Escherichia coli O1:K1 / APEC.